The following is a 196-amino-acid chain: ATP-dependent Clp protease proteolytic subunit (196 aa).

Ser99 functions as the Nucleophile in the catalytic mechanism. Residue His124 is part of the active site.

The protein belongs to the peptidase S14 family. As to quaternary structure, fourteen ClpP subunits assemble into 2 heptameric rings which stack back to back to give a disk-like structure with a central cavity, resembling the structure of eukaryotic proteasomes.

Its subcellular location is the cytoplasm. The catalysed reaction is Hydrolysis of proteins to small peptides in the presence of ATP and magnesium. alpha-casein is the usual test substrate. In the absence of ATP, only oligopeptides shorter than five residues are hydrolyzed (such as succinyl-Leu-Tyr-|-NHMec, and Leu-Tyr-Leu-|-Tyr-Trp, in which cleavage of the -Tyr-|-Leu- and -Tyr-|-Trp bonds also occurs).. Functionally, cleaves peptides in various proteins in a process that requires ATP hydrolysis. Has a chymotrypsin-like activity. Plays a major role in the degradation of misfolded proteins. The polypeptide is ATP-dependent Clp protease proteolytic subunit (Nitratiruptor sp. (strain SB155-2)).